The sequence spans 161 residues: Large ribosomal subunit protein uL10 (161 aa).

It belongs to the universal ribosomal protein uL10 family. Part of the ribosomal stalk of the 50S ribosomal subunit. The N-terminus interacts with L11 and the large rRNA to form the base of the stalk. The C-terminus forms an elongated spine to which L12 dimers bind in a sequential fashion forming a multimeric L10(L12)X complex.

Functionally, forms part of the ribosomal stalk, playing a central role in the interaction of the ribosome with GTP-bound translation factors. This Malacoplasma penetrans (strain HF-2) (Mycoplasma penetrans) protein is Large ribosomal subunit protein uL10.